Reading from the N-terminus, the 144-residue chain is Large ribosomal subunit protein uL13 (144 aa).

Belongs to the universal ribosomal protein uL13 family. In terms of assembly, part of the 50S ribosomal subunit.

This protein is one of the early assembly proteins of the 50S ribosomal subunit, although it is not seen to bind rRNA by itself. It is important during the early stages of 50S assembly. This Natronomonas pharaonis (strain ATCC 35678 / DSM 2160 / CIP 103997 / JCM 8858 / NBRC 14720 / NCIMB 2260 / Gabara) (Halobacterium pharaonis) protein is Large ribosomal subunit protein uL13.